The chain runs to 479 residues: MVRIQRRKLLASCLCVTATVFLLVTLQVMVELGKFERKEFKSSSLQDGHTKMEEAPTHLNSFLKKEGLTFNRKRKWELDSYPIMLWWSPLTGETGRLGQCGADACFFTINRTYLHHHMTKAFLFYGTDFNIDSLPLPRKAHHDWAVFHEESPKNNYKLFHKPVITLFNYTATFSRHSHLPLTTQYLESIEVLKSLRYLVPLQSKNKLRKRLAPLVYVQSDCDPPSDRDSYVRELMTYIEVDSYGECLRNKDLPQQLKNPASMDADGFYRIIAQYKFILAFENAVCDDYITEKFWRPLKLGVVPVYYGSPSITDWLPSNKSAILVSEFSHPRELASYIRRLDSDDRLYEAYVEWKLKGEISNQRLLTALRERKWGVQDVNQDNYIDAFECMVCTKVWANIRLQEKGLPPKRWEAEDTHLSCPEPTVFAFSPLRTPPLSSLREMWISSFEQSKKEAQALRWLVDRNQNFSSQEFWGLVFKD.

Residues 1-8 (MVRIQRRK) lie on the Cytoplasmic side of the membrane. Residues 9–31 (LLASCLCVTATVFLLVTLQVMVE) form a helical; Signal-anchor for type II membrane protein membrane-spanning segment. Residues 32 to 479 (LGKFERKEFK…QEFWGLVFKD (448 aa)) lie on the Lumenal side of the membrane. 2 N-linked (GlcNAc...) asparagine glycosylation sites follow: N110 and N168. C389 and C392 are oxidised to a cystine.

The protein belongs to the glycosyltransferase 10 family. Expressed in lung, digestive tract, gall bladder, placenta, kidney, uterus and brain. Not detected in spleen, heart, muscle, liver and pancreas.

It is found in the endoplasmic reticulum membrane. It localises to the golgi apparatus membrane. The protein localises to the golgi apparatus. The protein resides in the lysosome. It carries out the reaction L-threonyl-[protein] + GDP-beta-L-fucose = 3-O-(alpha-L-fucosyl)-L-threonyl-[protein] + GDP + H(+). The catalysed reaction is L-seryl-[protein] + GDP-beta-L-fucose = 3-O-(alpha-L-fucosyl)-L-seryl-[protein] + GDP + H(+). It functions in the pathway protein modification; protein glycosylation. Functionally, protein O-fucosyltransferase that specifically catalyzes O-fucosylation of serine or threonine residues in EMI domains of target proteins, such as MMRN1, MMRN2 and EMID1. Attaches fucose through an O-glycosidic linkage. O-fucosylation of EMI domain-containing proteins may be required for facilitating protein folding and secretion. May also show alpha-(1,3)-fucosyltransferase activity toward the innermost N-acetyl glucosamine (GlcNAc) residue in biantennary N-glycan acceptors. However, this was tested with a library of synthetic substrates and this activity is unsure in vivo. May be involved in biosynthesis of Lewis X-carrying biantennary N-glycans that regulate neuron stem cell self-renewal during brain development. This chain is GDP-fucose protein O-fucosyltransferase 3, found in Homo sapiens (Human).